The following is a 190-amino-acid chain: Imidazoleglycerol-phosphate dehydratase (190 aa).

This sequence belongs to the imidazoleglycerol-phosphate dehydratase family.

The protein resides in the cytoplasm. The catalysed reaction is D-erythro-1-(imidazol-4-yl)glycerol 3-phosphate = 3-(imidazol-4-yl)-2-oxopropyl phosphate + H2O. It participates in amino-acid biosynthesis; L-histidine biosynthesis; L-histidine from 5-phospho-alpha-D-ribose 1-diphosphate: step 6/9. In Methanococcus maripaludis (strain C7 / ATCC BAA-1331), this protein is Imidazoleglycerol-phosphate dehydratase.